The following is a 408-amino-acid chain: Multidrug resistance protein MdtG (408 aa).

11 helical membrane passes run 16 to 36 (LIVAWLGCFLTGAAFSLVMPF), 58 to 78 (IVFSITFLFSAIASPFWGGLA), 92 to 112 (LGMGIVMVLMGLAQNIWQFLI), 115 to 135 (ALLGLLGGFVPNANALIATQV), 146 to 166 (TLSTGGVSGALLGPMAGGLLA), 173 to 193 (PVFFITASVLILCFFVTLFCI), 224 to 244 (LFVTTLIIQVATGSIAPILTL), 256 to 276 (VAFISGMIASVPGVAALLSAP), 290 to 310 (ILITALIFSVLLLIPMSYVQT), 319 to 339 (FLLGAADGALLPAVQTLLVYN), and 378 to 398 (AVFLVTAGVVLFNAVYSWNSL).

It belongs to the major facilitator superfamily. DHA1 family. MdtG (TC 2.A.1.2.20) subfamily.

It is found in the cell inner membrane. Confers resistance to fosfomycin and deoxycholate. This Escherichia coli O127:H6 (strain E2348/69 / EPEC) protein is Multidrug resistance protein MdtG.